A 154-amino-acid chain; its full sequence is Large ribosomal subunit protein uL13 (154 aa).

The disordered stretch occupies residues 132 to 154; it reads PHEAQQPETLDVGAMNRKNKRAA.

Belongs to the universal ribosomal protein uL13 family. In terms of assembly, part of the 50S ribosomal subunit.

In terms of biological role, this protein is one of the early assembly proteins of the 50S ribosomal subunit, although it is not seen to bind rRNA by itself. It is important during the early stages of 50S assembly. The chain is Large ribosomal subunit protein uL13 from Rhodopseudomonas palustris (strain HaA2).